The primary structure comprises 405 residues: Phosphoglycerate kinase (405 aa).

Substrate-binding positions include 21-23 (DFN), R38, 59-62 (HQSR), R116, and R156. Residues E330 and 355 to 358 (GGHT) each bind ATP.

Belongs to the phosphoglycerate kinase family. Monomer.

Its subcellular location is the cytoplasm. It catalyses the reaction (2R)-3-phosphoglycerate + ATP = (2R)-3-phospho-glyceroyl phosphate + ADP. It participates in carbohydrate degradation; glycolysis; pyruvate from D-glyceraldehyde 3-phosphate: step 2/5. This chain is Phosphoglycerate kinase, found in Methanocorpusculum labreanum (strain ATCC 43576 / DSM 4855 / Z).